The following is a 589-amino-acid chain: TAF5-like RNA polymerase II p300/CBP-associated factor-associated factor 65 kDa subunit 5L (589 aa).

WD repeat units follow at residues 266-305 (NTEQ…LKSE), 340-379 (GHCG…NTVL), 382-421 (GHAY…PLRI), 424-463 (GHLA…SVRL), 466-505 (GHRG…LFKE), and 508-547 (GHTD…CNTP).

Belongs to the WD repeat TAF5 family. In terms of assembly, the PCAF complex is composed of a number of TBP-associated factors (TAFS), such as TAF5, TAF5L, TAF6, TAF6L, TAF9, TAF10 and TAF12, PCAF, and also PCAF-associated factors (PAFs), such as TADA2L/ADA2, TADA3L/ADA3 and SPT3. Component of the STAGA transcription coactivator-HAT complex, at least composed of SUPT3H, GCN5L2, TAF5L, TAF6L, SUPT7L, TADA3L, TAD1L, TAF10, TAF12, TRRAP and TAF9.

It is found in the nucleus. Functionally, functions as a component of the PCAF complex. The PCAF complex is capable of efficiently acetylating histones in a nucleosomal context. The PCAF complex could be considered as the human version of the yeast SAGA complex. With TAF6L, acts as an epigenetic regulator essential for somatic reprogramming. Regulates target genes through H3K9ac deposition and MYC recruitment which trigger MYC regulatory network to orchestrate gene expression programs to control embryonic stem cell state. This chain is TAF5-like RNA polymerase II p300/CBP-associated factor-associated factor 65 kDa subunit 5L, found in Mus musculus (Mouse).